A 508-amino-acid polypeptide reads, in one-letter code: ATP synthase subunit alpha (508 aa).

ATP is bound at residue G171 to T178.

The protein belongs to the ATPase alpha/beta chains family. F-type ATPases have 2 components, CF(1) - the catalytic core - and CF(0) - the membrane proton channel. CF(1) has five subunits: alpha(3), beta(3), gamma(1), delta(1), epsilon(1). CF(0) has three main subunits: a(1), b(2) and c(9-12). The alpha and beta chains form an alternating ring which encloses part of the gamma chain. CF(1) is attached to CF(0) by a central stalk formed by the gamma and epsilon chains, while a peripheral stalk is formed by the delta and b chains.

The protein resides in the cell membrane. It carries out the reaction ATP + H2O + 4 H(+)(in) = ADP + phosphate + 5 H(+)(out). Produces ATP from ADP in the presence of a proton gradient across the membrane. The alpha chain is a regulatory subunit. The polypeptide is ATP synthase subunit alpha (Protochlamydia amoebophila (strain UWE25)).